The chain runs to 208 residues: Thioredoxin domain-containing protein 9 (208 aa).

The 112-residue stretch at 68–179 (YEEVADEKEF…MENRLARSEV (112 aa)) folds into the Thioredoxin domain.

As to expression, expressed throughout the body with high expression in the nervous system, including the ventral nerve cord and tail neurons, and vulva.

It localises to the nucleus. The protein localises to the cytoplasm. In terms of biological role, required for normal microtubule organization and function. Regulates tubulin acetylation in ALM and PLM neurons. The chain is Thioredoxin domain-containing protein 9 from Caenorhabditis elegans.